Consider the following 125-residue polypeptide: UPF0325 protein Ping_0715 (125 aa).

It belongs to the UPF0325 family.

In Psychromonas ingrahamii (strain DSM 17664 / CCUG 51855 / 37), this protein is UPF0325 protein Ping_0715.